A 557-amino-acid polypeptide reads, in one-letter code: Alpha-barbatene synthase (557 aa).

(2E,6E)-farnesyl diphosphate contacts are provided by Arg-273, Asp-310, Asp-314, Arg-451, and Asp-454. The Mg(2+) site is built by Asp-310 and Asp-314. The DDXXD motif signature appears at 310–314 (DDACD). 3 residues coordinate Mg(2+): Asp-454, Asp-455, and Asp-462.

This sequence belongs to the terpene synthase family. Tpsa subfamily. In terms of assembly, monomer. Mg(2+) serves as cofactor. Requires Mn(2+) as cofactor. As to expression, expressed exclusively in flowers. Expressed in intrafloral nectaries and in the funiculus within the ovules.

It localises to the cytoplasm. The enzyme catalyses (2E,6E)-farnesyl diphosphate = (+)-alpha-barbatene + diphosphate. It catalyses the reaction (2E,6E)-farnesyl diphosphate = (+)-thujopsene + diphosphate. It carries out the reaction (2E,6E)-farnesyl diphosphate = (+)-beta-chamigrene + diphosphate. The catalysed reaction is (2E,6E)-farnesyl diphosphate = (+)-beta-barbatene + diphosphate. The enzyme catalyses (2E,6E)-farnesyl diphosphate = beta-sesquiphellandrene + diphosphate. It catalyses the reaction (2E,6E)-farnesyl diphosphate = (S)-beta-bisabolene + diphosphate. It carries out the reaction (2E,6E)-farnesyl diphosphate = (-)-alpha-cuprenene + diphosphate. The catalysed reaction is (2E,6E)-farnesyl diphosphate = alpha-zingiberene + diphosphate. The enzyme catalyses (2E,6E)-farnesyl diphosphate = beta-acoradiene + diphosphate. It catalyses the reaction (2E,6E)-farnesyl diphosphate = (E)-beta-farnesene + diphosphate. The protein operates within secondary metabolite biosynthesis; terpenoid biosynthesis. Functionally, involved in the biosynthesis of over 15 sesquiterpenes (C15). The major products are (+)-alpha-barbatene (27.3%), (+)-thujopsene (17.8%) and (+)-beta-chamigrene (9.9%). Can use farnesyl diphosphate or geranyl diphosphate as substrates, but not geranylgeranyl diphosphate. The polypeptide is Alpha-barbatene synthase (Arabidopsis thaliana (Mouse-ear cress)).